The following is a 344-amino-acid chain: Protein PopA1 (344 aa).

Disordered regions lie at residues 1-28, 58-108, 134-156, 211-242, and 268-311; these read MSVGNIQSPSNLPGLQNLNLNTNTNSQQ, SAGG…DANN, QPGGNDKGNGVGGANGAKGAGGQ, GNGVNGNQANGPQNAGDVNGANGADDGSEDQG, and GGGN…NLQS. Composition is skewed to low complexity over residues 8–28 and 65–83; these read SPSNLPGLQNLNLNTNTNSQQ and NTGNAPAKDGNANAGANDP. Residues 89–108 show a composition bias toward polar residues; it reads SKSQGPQSANKTGNVDDANN. Residues 138 to 156 show a composition bias toward gly residues; it reads NDKGNGVGGANGAKGAGGQ. Residues 215-235 show a composition bias toward low complexity; that stretch reads NGNQANGPQNAGDVNGANGAD. Gly residues predominate over residues 268–279; that stretch reads GGGNQAQGGSKG. Low complexity predominate over residues 280–294; the sequence is AGNASPASGANPGAN. The segment covering 295–311 has biased composition (polar residues); that stretch reads QPGSADDQSSGQNNLQS.

PopA2 and PopA3 are produced from PopA1.

Its subcellular location is the secreted. Acts as a specific hypersensitive response (HR) elicitor. Has activity on tobacco (non-host plant) and petunia but is without activity on tomato (host plant); PopA3 seems to be more active than a PopA1-PopA2 mixture. This is Protein PopA1 (popA) from Ralstonia nicotianae (strain ATCC BAA-1114 / GMI1000) (Ralstonia solanacearum).